Consider the following 669-residue polypeptide: MFLLRGRGHWAAASLGRRLPLRRLRSDSAAPCTPHFDVVVIGGGHAGTEAAAAAARCGSRTLLLTHRVDTIGQMSCNPSFGGIGKGHLMREVDALDGLCSRICDQSGIHYKVLNRRKGPAVWGLRAQIDRKLYKQNMQKEILSTPLLTVQKGAVEDLVLAEPEPGYPGKSRVRGVVLADGSTIYAESVILTTGTFLRGMIIIGLEMHPAGRLGDQPSIGLAQTLEKLGFMVGRLKTGTPPRLGKESINFSILNKHTPDDPSIPFSFLSDSVWIKPEDQLPCYLTHTNPRVDAIVLENLHLNSHVQETTKGPRYCPSIESKVLRFPNRLHQVWLEPEGMDSDLIYPQGLSVTLPAELQEKMITCIRGLEKAKMVHPGYGVQYDYLDPRQISPSLETHLVQRLFFAGQINGTTGYEEAAAQGVIAGINASLRVSRKPPFVVSRTEGYIGVLIDDLTTLGTSEPYRMFTSRVEFRLSLRPDNADTRLTFRAHKEAGCVSSQRFERALWMKSSLEEGISVLKSIKFSSSKWKKLIPQIPISINRSLPVSALDVLKYEEVDMESLVGVLPEPLEKYTACRELARRLKIEASYESVLSYQLQEIKEVQQDEALQLPHELDYLTIRDVSLSQEVREKLHLSRPQTIGAASRIPGVTPAAIINLLRFVRSTRQSRQQ.

The N-terminal 25 residues, 1–25, are a transit peptide targeting the mitochondrion; the sequence is MFLLRGRGHWAAASLGRRLPLRRLR. FAD contacts are provided by residues 42–47, V154, S217, and Q406; that span reads GGGHAG. K507 carries the post-translational modification N6-methyllysine.

This sequence belongs to the MnmG family. In terms of assembly, homodimer; forms a dimer in the presence of potassium. Interacts with GTPBP3; forms the GTPBP3-MTO1 complex composed of homodimers of GTPBP3 and MTO1. FAD serves as cofactor. In terms of tissue distribution, ubiquitously expressed in various tissues, but with markedly elevated expression in tissues of high metabolic rates.

The protein localises to the mitochondrion. It catalyses the reaction 5,10-methylenetetrahydrofolate + uridine(34) in tRNA + taurine + GTP + A + H2O = 5-taurinomethyluridine(34) in tRNA + 7,8-dihydrofolate + GDP + AH2 + phosphate + H(+). Its function is as follows. Component of the GTPBP3-MTO1 complex that catalyzes the 5-taurinomethyluridine (taum(5)U) modification at the 34th wobble position (U34) of mitochondrial tRNAs (mt-tRNAs), which plays a role in mt-tRNA decoding and mitochondrial translation. Taum(5)U formation on mammalian mt-tRNA requires the presence of both GTPBP3-mediated GTPase activity and MTO1 catalytic activity. This Mus musculus (Mouse) protein is 5-taurinomethyluridine-[tRNA] synthase subunit MTO1, mitochondrial.